The chain runs to 37 residues: Disintegrin morulustatin (37 aa).

Cystine bridges form between cysteine 12/cysteine 16, cysteine 22/cysteine 36, and cysteine 24/cysteine 31.

It belongs to the venom metalloproteinase (M12B) family. P-II subfamily. P-IIa sub-subfamily. In terms of tissue distribution, expressed by the venom gland.

The protein resides in the secreted. Inhibits ADP-induced platelet aggregation in human whole blood in a concentration-dependent manner (IC(50)=89.5 nM). The chain is Disintegrin morulustatin from Crotalus morulus (Tamaulipan rock rattlesnake).